The sequence spans 160 residues: Ribosomal RNA large subunit methyltransferase H (160 aa).

2 residues coordinate S-adenosyl-L-methionine: L76 and G108.

The protein belongs to the RNA methyltransferase RlmH family. Homodimer.

The protein localises to the cytoplasm. The enzyme catalyses pseudouridine(1915) in 23S rRNA + S-adenosyl-L-methionine = N(3)-methylpseudouridine(1915) in 23S rRNA + S-adenosyl-L-homocysteine + H(+). In terms of biological role, specifically methylates the pseudouridine at position 1915 (m3Psi1915) in 23S rRNA. The protein is Ribosomal RNA large subunit methyltransferase H of Nitrobacter hamburgensis (strain DSM 10229 / NCIMB 13809 / X14).